A 717-amino-acid polypeptide reads, in one-letter code: Ribosomal RNA large subunit methyltransferase K/L (717 aa).

Positions Ile-43–Leu-154 constitute a THUMP domain.

Belongs to the methyltransferase superfamily. RlmKL family.

The protein localises to the cytoplasm. It catalyses the reaction guanosine(2445) in 23S rRNA + S-adenosyl-L-methionine = N(2)-methylguanosine(2445) in 23S rRNA + S-adenosyl-L-homocysteine + H(+). The catalysed reaction is guanosine(2069) in 23S rRNA + S-adenosyl-L-methionine = N(2)-methylguanosine(2069) in 23S rRNA + S-adenosyl-L-homocysteine + H(+). In terms of biological role, specifically methylates the guanine in position 2445 (m2G2445) and the guanine in position 2069 (m7G2069) of 23S rRNA. The chain is Ribosomal RNA large subunit methyltransferase K/L from Aeromonas hydrophila subsp. hydrophila (strain ATCC 7966 / DSM 30187 / BCRC 13018 / CCUG 14551 / JCM 1027 / KCTC 2358 / NCIMB 9240 / NCTC 8049).